The sequence spans 394 residues: MVMAMDRIALFSSSSSVYHHGSSHSHGSKSSRVFTIRSDSTAVGRKLYIPPREVHLQVKYSMPPQKLEIFKSLEGWANDNLLAYLKPVEKSWQPTDFLPEPESEGFYDQVKELRERCKELSDDYLIVLVGDMITEEALPTYQTMINTLDGVRDETGASPTPWAVWTRAWTAEENRHGDLLNKYLYLSGRVDMRQIEKTIQYLIGSGMDPKTENNPYLGFIYTSFQERATFISHGNTARLAKDLGDLTLGKICGTIAADERRHEHAYTKIVEKLFEIDPDTTVVGFADMMRKKISMPAHLMYDGRDDNLFDHFSSVAQRLGVYTAKDYADILQHLVERWNVEKLSDLSSEGNRAQDYLCGLPARIRKLEERAQGRTKEAAKNIPFSWIFGREVRA.

The N-terminal 37 residues, 1–37 (MVMAMDRIALFSSSSSVYHHGSSHSHGSKSSRVFTIR), are a transit peptide targeting the chloroplast. Positions 135, 173, 176, 226, 259, and 262 each coordinate Fe cation.

The protein belongs to the fatty acid desaturase type 2 family. As to quaternary structure, homodimer. Fe(2+) serves as cofactor. In terms of tissue distribution, ubiquitously expressed.

It localises to the plastid. It is found in the chloroplast. The enzyme catalyses octadecanoyl-[ACP] + 2 reduced [2Fe-2S]-[ferredoxin] + O2 + 2 H(+) = (9Z)-octadecenoyl-[ACP] + 2 oxidized [2Fe-2S]-[ferredoxin] + 2 H2O. Its pathway is lipid metabolism; fatty acid metabolism. Functionally, converts stearoyl-ACP to oleoyl-ACP by introduction of a cis double bond between carbons 9 and 10 of the acyl chain. In Arabidopsis thaliana (Mouse-ear cress), this protein is Stearoyl-[acyl-carrier-protein] 9-desaturase 1, chloroplastic (S-ACP-DES1).